The chain runs to 160 residues: Phosphopantetheine adenylyltransferase (160 aa).

Threonine 9 serves as a coordination point for substrate. ATP contacts are provided by residues 9-10 (TF) and histidine 17. Residues lysine 41, leucine 73, and arginine 87 each contribute to the substrate site. ATP-binding positions include 88 to 90 (GLR), glutamate 98, and 123 to 129 (YSFISST).

This sequence belongs to the bacterial CoaD family. In terms of assembly, homohexamer. The cofactor is Mg(2+).

Its subcellular location is the cytoplasm. It carries out the reaction (R)-4'-phosphopantetheine + ATP + H(+) = 3'-dephospho-CoA + diphosphate. Its pathway is cofactor biosynthesis; coenzyme A biosynthesis; CoA from (R)-pantothenate: step 4/5. Its function is as follows. Reversibly transfers an adenylyl group from ATP to 4'-phosphopantetheine, yielding dephospho-CoA (dPCoA) and pyrophosphate. The polypeptide is Phosphopantetheine adenylyltransferase (Ectopseudomonas mendocina (strain ymp) (Pseudomonas mendocina)).